A 154-amino-acid chain; its full sequence is Thioredoxin-like protein CXXS2 (154 aa).

In terms of domain architecture, Thioredoxin spans 23-148 (RRNKTQARSQ…LQKKTAAAAN (126 aa)). At S31 the chain carries Phosphoserine.

This sequence belongs to the thioredoxin family. As to expression, ubiquitous.

The protein resides in the cytoplasm. Possesses low disulfide reductase activity, but efficient protein disulfide isomerase activity. Does not possess deglutathionylation activity. The polypeptide is Thioredoxin-like protein CXXS2 (CXXS2) (Arabidopsis thaliana (Mouse-ear cress)).